A 301-amino-acid chain; its full sequence is Ribonuclease Z (301 aa).

Zn(2+) is bound by residues His60, His62, Asp64, His65, His137, Asp207, and His265. Asp64 acts as the Proton acceptor in catalysis.

The protein belongs to the RNase Z family. In terms of assembly, homodimer. The cofactor is Zn(2+).

The catalysed reaction is Endonucleolytic cleavage of RNA, removing extra 3' nucleotides from tRNA precursor, generating 3' termini of tRNAs. A 3'-hydroxy group is left at the tRNA terminus and a 5'-phosphoryl group is left at the trailer molecule.. Zinc phosphodiesterase, which displays some tRNA 3'-processing endonuclease activity. Probably involved in tRNA maturation, by removing a 3'-trailer from precursor tRNA. The sequence is that of Ribonuclease Z from Exiguobacterium sibiricum (strain DSM 17290 / CCUG 55495 / CIP 109462 / JCM 13490 / 255-15).